The sequence spans 632 residues: tRNA uridine 5-carboxymethylaminomethyl modification enzyme MnmG (632 aa).

FAD-binding positions include 15-20 (GAGHAG), Ile-127, and Ser-182. An NAD(+)-binding site is contributed by 276-290 (GPRYCPSIEDKIVRF). Position 373 (Gln-373) interacts with FAD.

This sequence belongs to the MnmG family. Homodimer. Heterotetramer of two MnmE and two MnmG subunits. It depends on FAD as a cofactor.

It localises to the cytoplasm. In terms of biological role, NAD-binding protein involved in the addition of a carboxymethylaminomethyl (cmnm) group at the wobble position (U34) of certain tRNAs, forming tRNA-cmnm(5)s(2)U34. This chain is tRNA uridine 5-carboxymethylaminomethyl modification enzyme MnmG, found in Streptococcus pyogenes serotype M3 (strain SSI-1).